Consider the following 117-residue polypeptide: Immunoglobulin heavy variable 7-4-1 (117 aa).

The N-terminal stretch at 1–19 is a signal peptide; it reads MDWTWRILFLVAAATGAHS. Residues 20 to 44 are framework-1; the sequence is QVQLVQSGSELKKPGASVKVSCKAS. Residues 20–117 enclose the Ig-like domain; sequence QVQLVQSGSE…EDTAVYYCAR (98 aa). Cys-41 and Cys-115 are disulfide-bonded. Residues 45–52 are complementarity-determining-1; that stretch reads GYTFTSYA. The interval 53 to 69 is framework-2; the sequence is MNWVRQAPGQGLEWMGW. The segment at 70–77 is complementarity-determining-2; the sequence is INTNTGNP. The framework-3 stretch occupies residues 78-115; the sequence is TYAQGFTGRFVFSLDTSVSTAYLQICSLKAEDTAVYYC. The segment at 116-117 is complementarity-determining-3; the sequence is AR.

As to quaternary structure, immunoglobulins are composed of two identical heavy chains and two identical light chains; disulfide-linked.

It is found in the secreted. Its subcellular location is the cell membrane. Functionally, v region of the variable domain of immunoglobulin heavy chains that participates in the antigen recognition. Immunoglobulins, also known as antibodies, are membrane-bound or secreted glycoproteins produced by B lymphocytes. In the recognition phase of humoral immunity, the membrane-bound immunoglobulins serve as receptors which, upon binding of a specific antigen, trigger the clonal expansion and differentiation of B lymphocytes into immunoglobulins-secreting plasma cells. Secreted immunoglobulins mediate the effector phase of humoral immunity, which results in the elimination of bound antigens. The antigen binding site is formed by the variable domain of one heavy chain, together with that of its associated light chain. Thus, each immunoglobulin has two antigen binding sites with remarkable affinity for a particular antigen. The variable domains are assembled by a process called V-(D)-J rearrangement and can then be subjected to somatic hypermutations which, after exposure to antigen and selection, allow affinity maturation for a particular antigen. The protein is Immunoglobulin heavy variable 7-4-1 of Homo sapiens (Human).